A 357-amino-acid chain; its full sequence is RNA 3'-terminal phosphate cyclase (357 aa).

ATP is bound by residues glutamine 102 and 293–296 (HMGD). The active-site Tele-AMP-histidine intermediate is the histidine 319.

This sequence belongs to the RNA 3'-terminal cyclase family. Type 1 subfamily.

The protein resides in the cytoplasm. The catalysed reaction is a 3'-end 3'-phospho-ribonucleotide-RNA + ATP = a 3'-end 2',3'-cyclophospho-ribonucleotide-RNA + AMP + diphosphate. In terms of biological role, catalyzes the conversion of 3'-phosphate to a 2',3'-cyclic phosphodiester at the end of RNA. The mechanism of action of the enzyme occurs in 3 steps: (A) adenylation of the enzyme by ATP; (B) transfer of adenylate to an RNA-N3'P to produce RNA-N3'PP5'A; (C) and attack of the adjacent 2'-hydroxyl on the 3'-phosphorus in the diester linkage to produce the cyclic end product. The biological role of this enzyme is unknown but it is likely to function in some aspects of cellular RNA processing. This chain is RNA 3'-terminal phosphate cyclase, found in Staphylothermus marinus (strain ATCC 43588 / DSM 3639 / JCM 9404 / F1).